The chain runs to 92 residues: Small ribosomal subunit protein bS18 (92 aa).

This sequence belongs to the bacterial ribosomal protein bS18 family. Part of the 30S ribosomal subunit. Forms a tight heterodimer with protein bS6.

Its function is as follows. Binds as a heterodimer with protein bS6 to the central domain of the 16S rRNA, where it helps stabilize the platform of the 30S subunit. In Ralstonia nicotianae (strain ATCC BAA-1114 / GMI1000) (Ralstonia solanacearum), this protein is Small ribosomal subunit protein bS18.